A 459-amino-acid chain; its full sequence is Argininosuccinate lyase (459 aa).

It belongs to the lyase 1 family. Argininosuccinate lyase subfamily.

It is found in the cytoplasm. It carries out the reaction 2-(N(omega)-L-arginino)succinate = fumarate + L-arginine. It participates in amino-acid biosynthesis; L-arginine biosynthesis; L-arginine from L-ornithine and carbamoyl phosphate: step 3/3. The protein is Argininosuccinate lyase of Chromobacterium violaceum (strain ATCC 12472 / DSM 30191 / JCM 1249 / CCUG 213 / NBRC 12614 / NCIMB 9131 / NCTC 9757 / MK).